We begin with the raw amino-acid sequence, 1199 residues long: Major DNA-binding protein (1199 aa).

The segment at 289–314 is disordered; it reads SGTTTARGARRNDVNSTSKPSPSGGF. A zinc finger lies at 497–510; it reads CSLCEKHTRPVCAH. 2 consecutive short sequence motifs (required for filament formation) follow at residues 841-842 and 1146-1148; these read FW and FNF. Positions 1172 to 1199 are required for nuclear localization; that stretch reads LKRPPEDDELFDLSGIPIKHGNITMEMI.

The protein belongs to the herpesviridae major DNA-binding protein family. Homooligomers. Forms double-helical filaments necessary for the formation of replication compartments within the host nucleus. Interacts with the origin-binding protein. Interacts with the helicase primase complex; this interaction stimulates primer synthesis activity of the helicase-primase complex. Interacts with the DNA polymerase. Interacts with the alkaline exonuclease; this interaction increases its nuclease processivity.

The protein localises to the host nucleus. Functionally, plays several crucial roles in viral infection. Participates in the opening of the viral DNA origin to initiate replication by interacting with the origin-binding protein. May disrupt loops, hairpins and other secondary structures present on ssDNA to reduce and eliminate pausing of viral DNA polymerase at specific sites during elongation. Promotes viral DNA recombination by performing strand-transfer, characterized by the ability to transfer a DNA strand from a linear duplex to a complementary single-stranded DNA circle. Can also catalyze the renaturation of complementary single strands. Additionally, reorganizes the host cell nucleus, leading to the formation of prereplicative sites and replication compartments. This process is driven by the protein which can form double-helical filaments in the absence of DNA. The chain is Major DNA-binding protein from Varicella-zoster virus (strain Oka vaccine) (HHV-3).